The sequence spans 512 residues: MEKFQIYLEXDGFQQQNFLYPLLFREYIYTLXHDHGLNRSAISLENGGYDNKSSSLSMKRLSTLLYQQIHLSIYANDSNPNQFIGHNNNLYSQMISEGFAVIVEIPFSLRLASFLEGQEMAKSHNFQSIHSIFPFFEDNFSHLNYVLDVLIPHPIRPEILVQTFRYWVKDASSLHLLRFFLHEYFNWNSLITPKKSISIFSTSNPRFFLFLYNSHVYEDEFIFFFLRNQSSHLRSTSSGVLFERIHFYGKVNYLVEVFANDFQNILWLFKDPFXHYVRYRGKAILASKDTPLLMNKWKYYLVNLWQWHFHVWSQPGRVHINHLHKYSINFLGYLSRGRLNTLVVRSQMLENAFLIENVMKKFETAVPIISLIESLTKARFCNPLXNPISKPTWADSSDSHIINRFVRICRNLSHYHSGSSKKKGLYRIKYILRVSCVKSLVRKHKSTVRVFLKRLGSEFFREFLTEEEHAISLIFSRASFTWRRLYRGRVWYLDIICINDLVNHDKLEIVFR.

It belongs to the intron maturase 2 family. MatK subfamily.

The protein resides in the plastid. It is found in the chloroplast. Usually encoded in the trnK tRNA gene intron. Probably assists in splicing its own and other chloroplast group II introns. This chain is Maturase K, found in Koelreuteria paniculata (Goldenrain tree).